The following is an 81-amino-acid chain: Putative chemokine-related protein B42 (81 aa).

3 disulfides stabilise this stretch: Cys-7-Cys-73, Cys-8-Cys-29, and Cys-11-Cys-45.

As to expression, expressed in placenta, heart, lung, liver, pancreas, skeletal muscle and brain.

It is found in the cytoplasm. In Homo sapiens (Human), this protein is Putative chemokine-related protein B42.